The chain runs to 160 residues: Crossover junction endodeoxyribonuclease RuvC (160 aa).

Catalysis depends on residues aspartate 7, glutamate 67, and aspartate 138. 3 residues coordinate Mg(2+): aspartate 7, glutamate 67, and aspartate 138.

The protein belongs to the RuvC family. As to quaternary structure, homodimer which binds Holliday junction (HJ) DNA. The HJ becomes 2-fold symmetrical on binding to RuvC with unstacked arms; it has a different conformation from HJ DNA in complex with RuvA. In the full resolvosome a probable DNA-RuvA(4)-RuvB(12)-RuvC(2) complex forms which resolves the HJ. Mg(2+) is required as a cofactor.

The protein localises to the cytoplasm. It carries out the reaction Endonucleolytic cleavage at a junction such as a reciprocal single-stranded crossover between two homologous DNA duplexes (Holliday junction).. The RuvA-RuvB-RuvC complex processes Holliday junction (HJ) DNA during genetic recombination and DNA repair. Endonuclease that resolves HJ intermediates. Cleaves cruciform DNA by making single-stranded nicks across the HJ at symmetrical positions within the homologous arms, yielding a 5'-phosphate and a 3'-hydroxyl group; requires a central core of homology in the junction. The consensus cleavage sequence is 5'-(A/T)TT(C/G)-3'. Cleavage occurs on the 3'-side of the TT dinucleotide at the point of strand exchange. HJ branch migration catalyzed by RuvA-RuvB allows RuvC to scan DNA until it finds its consensus sequence, where it cleaves and resolves the cruciform DNA. In Brachyspira hyodysenteriae (strain ATCC 49526 / WA1), this protein is Crossover junction endodeoxyribonuclease RuvC.